Reading from the N-terminus, the 514-residue chain is Cholesterol side-chain cleavage enzyme, mitochondrial (514 aa).

The transit peptide at Ser-1–Arg-39 directs the protein to the mitochondrion. Position 461 (Cys-461) interacts with heme.

It belongs to the cytochrome P450 family. Heme serves as cofactor.

It localises to the mitochondrion inner membrane. It carries out the reaction 6 reduced [adrenodoxin] + cholesterol + 3 O2 + 6 H(+) = 4-methylpentanal + pregnenolone + 6 oxidized [adrenodoxin] + 4 H2O. It participates in lipid metabolism; C21-steroid hormone metabolism. Functionally, catalyzes the side-chain cleavage reaction of cholesterol to pregnenolone, the precursor of most steroid hormones. The protein is Cholesterol side-chain cleavage enzyme, mitochondrial (CYP11A1) of Hypanus americanus (Southern stingray).